A 769-amino-acid chain; its full sequence is Polyribonucleotide nucleotidyltransferase (769 aa).

Mg(2+)-binding residues include Asp490 and Asp496. The 60-residue stretch at 557-616 (PKIDTIMIPVDKIKVVIGKGGEQIDKIIAETGVKIDIDDEGLCSIFSSDQSAIDRAKEII) folds into the KH domain. Positions 626–694 (GEVYEAKVVR…DKGRVDASMR (69 aa)) constitute an S1 motif domain. Residues 700 to 734 (PEGYVEPERKPRERRDNKDRRNGNGFDRRNNDRNN) are compositionally biased toward basic and acidic residues. A disordered region spans residues 700–769 (PEGYVEPERK…FPELSTKKPE (70 aa)). Low complexity predominate over residues 736–746 (NNHNNNSGNHS). Residues 747–769 (FELRERKSHVDHEFPELSTKKPE) show a composition bias toward basic and acidic residues.

Belongs to the polyribonucleotide nucleotidyltransferase family. Requires Mg(2+) as cofactor.

The protein localises to the cytoplasm. It catalyses the reaction RNA(n+1) + phosphate = RNA(n) + a ribonucleoside 5'-diphosphate. Involved in mRNA degradation. Catalyzes the phosphorolysis of single-stranded polyribonucleotides processively in the 3'- to 5'-direction. The sequence is that of Polyribonucleotide nucleotidyltransferase from Lactococcus lactis subsp. cremoris (strain SK11).